Reading from the N-terminus, the 155-residue chain is SsrA-binding protein (155 aa).

This sequence belongs to the SmpB family.

It localises to the cytoplasm. In terms of biological role, required for rescue of stalled ribosomes mediated by trans-translation. Binds to transfer-messenger RNA (tmRNA), required for stable association of tmRNA with ribosomes. tmRNA and SmpB together mimic tRNA shape, replacing the anticodon stem-loop with SmpB. tmRNA is encoded by the ssrA gene; the 2 termini fold to resemble tRNA(Ala) and it encodes a 'tag peptide', a short internal open reading frame. During trans-translation Ala-aminoacylated tmRNA acts like a tRNA, entering the A-site of stalled ribosomes, displacing the stalled mRNA. The ribosome then switches to translate the ORF on the tmRNA; the nascent peptide is terminated with the 'tag peptide' encoded by the tmRNA and targeted for degradation. The ribosome is freed to recommence translation, which seems to be the essential function of trans-translation. In Streptococcus agalactiae serotype Ia (strain ATCC 27591 / A909 / CDC SS700), this protein is SsrA-binding protein.